The following is a 118-amino-acid chain: Ribonuclease P protein component (118 aa).

The protein belongs to the RnpA family. In terms of assembly, consists of a catalytic RNA component (M1 or rnpB) and a protein subunit.

The catalysed reaction is Endonucleolytic cleavage of RNA, removing 5'-extranucleotides from tRNA precursor.. In terms of biological role, RNaseP catalyzes the removal of the 5'-leader sequence from pre-tRNA to produce the mature 5'-terminus. It can also cleave other RNA substrates such as 4.5S RNA. The protein component plays an auxiliary but essential role in vivo by binding to the 5'-leader sequence and broadening the substrate specificity of the ribozyme. This chain is Ribonuclease P protein component, found in Bifidobacterium animalis subsp. lactis (strain AD011).